We begin with the raw amino-acid sequence, 157 residues long: Protein Smg (157 aa).

It belongs to the Smg family.

This chain is Protein Smg, found in Escherichia coli O6:H1 (strain CFT073 / ATCC 700928 / UPEC).